Consider the following 200-residue polypeptide: MIRLFIAEDQRMLLGALGSLLDLEEDMTVIGQALNGEEALHAILKLEPDVCIMDIEMPVRSGLNVAEELMKKGCVSKVIILTTFARPGYFERAVKAGAHGYLLKDGEIDDLADAIRKCVKGKRVFSPELTFNMMRDENPLTVREQEILRLAALGKTTKDITLELYLSQGTVRNYISEIIQKLNAKNRTEAASIAEEKGWI.

In terms of domain architecture, Response regulatory spans 3 to 119; that stretch reads RLFIAEDQRM…DLADAIRKCV (117 aa). Aspartate 54 is modified (4-aspartylphosphate). The HTH luxR-type domain maps to 133–198; sequence MMRDENPLTV…EAASIAEEKG (66 aa). The segment at residues 157 to 176 is a DNA-binding region (H-T-H motif); it reads TKDITLELYLSQGTVRNYIS.

Post-translationally, phosphorylated by YvfT.

The protein resides in the cytoplasm. Functionally, member of the two-component regulatory system YvfT/YvfU. This is an uncharacterized protein from Bacillus subtilis (strain 168).